A 557-amino-acid polypeptide reads, in one-letter code: Formate--tetrahydrofolate ligase (557 aa).

67 to 74 (TPAGEGKT) is a binding site for ATP.

Belongs to the formate--tetrahydrofolate ligase family.

It carries out the reaction (6S)-5,6,7,8-tetrahydrofolate + formate + ATP = (6R)-10-formyltetrahydrofolate + ADP + phosphate. The protein operates within one-carbon metabolism; tetrahydrofolate interconversion. This Cereibacter sphaeroides (strain ATCC 17029 / ATH 2.4.9) (Rhodobacter sphaeroides) protein is Formate--tetrahydrofolate ligase.